Consider the following 1235-residue polypeptide: ATP-dependent helicase/nuclease subunit A (1235 aa).

The 469-residue stretch at 3-471 (TKWTETQKSA…IKLSENFRSR (469 aa)) folds into the UvrD-like helicase ATP-binding domain. 24 to 31 (AGAGTGKT) is an ATP binding site. The 300-residue stretch at 509 to 808 (PFEGNCGGDV…RIMSIHKSKG (300 aa)) folds into the UvrD-like helicase C-terminal domain.

The protein belongs to the helicase family. AddA subfamily. As to quaternary structure, heterodimer of AddA and AddB/RexB. Mg(2+) serves as cofactor.

It catalyses the reaction Couples ATP hydrolysis with the unwinding of duplex DNA by translocating in the 3'-5' direction.. The catalysed reaction is ATP + H2O = ADP + phosphate + H(+). In terms of biological role, the heterodimer acts as both an ATP-dependent DNA helicase and an ATP-dependent, dual-direction single-stranded exonuclease. Recognizes the chi site generating a DNA molecule suitable for the initiation of homologous recombination. The AddA nuclease domain is required for chi fragment generation; this subunit has the helicase and 3' -&gt; 5' nuclease activities. This chain is ATP-dependent helicase/nuclease subunit A, found in Clostridium kluyveri (strain ATCC 8527 / DSM 555 / NBRC 12016 / NCIMB 10680 / K1).